The chain runs to 452 residues: MREIINIHIGQAGIQAGEQVWSLMCAEHGINQDGTRNSTSANGNSDCSVLFSEGSRGKYVPRNLMVDLEPSVVDSVRNSSYKELYHPAQMITGREDAANNFARGHYTVGKDMLDVTVDRLRKIADNCTSLQGFQIFHSVGGGTGSGFASLLVERLSVEFPKKCKLSYTVYPSPQLATSVVEPYNSVLSTHSLLEHNDISVVLDNQAIYDICKQRLKIERANYRNLNHVISQTVSAITCSLRFSGSLNVDMNEYQTNLVPYPRIHFMLSSLAPMISRQENYYHENNVAELTSSVFEADNMMAKCNPRDGKYIASCLMYRGDVVNKEVTDAVKNVKSKANIQFVDWSPCAFKIGVNSQKPTVLPDSEFAQVERSCAMISNNTAISQVFERMNDKFDLLYAKRAYVHHFVSEGMEEGEFAEAREDLAALEKDYTELASNSVNEEDSMLDEGETLN.

Residues Gln-11, Glu-69, Ser-138, Gly-142, Thr-143, Thr-177, Asn-204, and Asn-226 each coordinate GTP. Glu-69 contacts Mg(2+). The active site involves Glu-252.

This sequence belongs to the tubulin family. Dimer of alpha and beta chains. A typical microtubule is a hollow water-filled tube with an outer diameter of 25 nm and an inner diameter of 15 nM. Alpha-beta heterodimers associate head-to-tail to form protofilaments running lengthwise along the microtubule wall with the beta-tubulin subunit facing the microtubule plus end conferring a structural polarity. Microtubules usually have 13 protofilaments but different protofilament numbers can be found in some organisms and specialized cells. The cofactor is Mg(2+).

Its subcellular location is the cytoplasm. It localises to the cytoskeleton. It is found in the spindle. The catalysed reaction is GTP + H2O = GDP + phosphate + H(+). Tubulin is the major constituent of microtubules, a cylinder consisting of laterally associated linear protofilaments composed of alpha- and beta-tubulin heterodimers. Microtubules grow by the addition of GTP-tubulin dimers to the microtubule end, where a stabilizing cap forms. Below the cap, tubulin dimers are in GDP-bound state, owing to GTPase activity of alpha-tubulin. This chain is Tubulin alpha-6 chain (TUBA6), found in Naegleria pringsheimi (Amoeba).